The primary structure comprises 455 residues: Genome polyprotein (455 aa).

Cys-5 functions as the For nuclear inclusion protein A activity in the catalytic mechanism. Residues 182–198 show a composition bias toward basic and acidic residues; sequence NLDAGKESKKETSDKGN. The tract at residues 182 to 225 is disordered; sequence NLDAGKESKKETSDKGNKPQNSQVGQGSKEPTKTGTVSKDVNVG.

The protein belongs to the potyviridae genome polyprotein family. Post-translationally, genome polyprotein of potyviruses undergoes post-translational proteolytic processing by the main proteinase NIa-pro resulting in the production of at least ten individual proteins. The P1 proteinase and the HC-pro cleave only their respective C-termini autocatalytically. 6K1 is essential for proper proteolytic separation of P3 from CI.

It is found in the virion. The catalysed reaction is RNA(n) + a ribonucleoside 5'-triphosphate = RNA(n+1) + diphosphate. Its function is as follows. An RNA-dependent RNA polymerase that plays an essential role in the virus replication. Functionally, involved in aphid transmission, cell-to-cell and systemis movement, encapsidation of the viral RNA and in the regulation of viral RNA amplification. The sequence is that of Genome polyprotein from Citrullus lanatus (Watermelon).